The following is a 124-amino-acid chain: Fluoride-specific ion channel FluC (124 aa).

A run of 4 helical transmembrane segments spans residues 4-24 (FLAVGFGAAVGAWLRWGLGLW), 34-54 (LGTLAANVIGGYFIGLVLAWF), 67-87 (FVITGLLGGLTTFSTFSAEVV), and 100-120 (LIAFAHLAGSFIATGLGFYSL). 2 residues coordinate Na(+): Gly-74 and Thr-77.

The protein belongs to the fluoride channel Fluc/FEX (TC 1.A.43) family.

The protein resides in the cell inner membrane. The catalysed reaction is fluoride(in) = fluoride(out). Its activity is regulated as follows. Na(+) is not transported, but it plays an essential structural role and its presence is essential for fluoride channel function. Fluoride-specific ion channel. Important for reducing fluoride concentration in the cell, thus reducing its toxicity. The polypeptide is Fluoride-specific ion channel FluC (Thiobacillus denitrificans (strain ATCC 25259 / T1)).